We begin with the raw amino-acid sequence, 284 residues long: Bifunctional protein FolD (284 aa).

NADP(+)-binding positions include 165–167 (GAS), S190, and I231.

The protein belongs to the tetrahydrofolate dehydrogenase/cyclohydrolase family. Homodimer.

It catalyses the reaction (6R)-5,10-methylene-5,6,7,8-tetrahydrofolate + NADP(+) = (6R)-5,10-methenyltetrahydrofolate + NADPH. It carries out the reaction (6R)-5,10-methenyltetrahydrofolate + H2O = (6R)-10-formyltetrahydrofolate + H(+). The protein operates within one-carbon metabolism; tetrahydrofolate interconversion. Its function is as follows. Catalyzes the oxidation of 5,10-methylenetetrahydrofolate to 5,10-methenyltetrahydrofolate and then the hydrolysis of 5,10-methenyltetrahydrofolate to 10-formyltetrahydrofolate. The sequence is that of Bifunctional protein FolD from Polynucleobacter asymbioticus (strain DSM 18221 / CIP 109841 / QLW-P1DMWA-1) (Polynucleobacter necessarius subsp. asymbioticus).